The chain runs to 1119 residues: DISARM protein DrmA (1119 aa).

The disordered stretch occupies residues 73–95; it reads PESGMEEDVEQQRNSELEQEAEE. One can recognise a Helicase C-terminal domain in the interval 813–986; the sequence is ELSKYIDPYR…ATPYASRARD (174 aa).

Belongs to the helicase family.

It localises to the cytoplasm. Functionally, component of antiviral defense system DISARM (defense island system associated with restriction-modification), composed of DrmE, DrmA, DrmB, DrmC and DrmMII. DISARM is probably a multi-gene restriction module, this subunit is probably a helicase. Expression of DISARM in B.subtilis (strain BEST7003) confers resistance to phages Nf, phi29, phi105, phi3T, SPO1, SPR and SPP1. Protection is over 10(7)-fold against phi3T, 10(4)-10(5)-fold against Nf, phi29, phi105 and SPR, 100-fold against SPO1 and 10-fold against SPP1. DISARM does not interfere with phage adsorption, but instead interferes with (phi3T) DNA replication early in its cycle, preventing replication, circularization and lysogeny and probably causes phage DNA degradation (DNA is degraded in SPP1-infected cells). This is DISARM protein DrmA from Bacillus paralicheniformis (strain ATCC 9945a / NCIMB 11709 / CD-2).